A 386-amino-acid polypeptide reads, in one-letter code: uncharacterized protein (386 aa).

Position 185 is an N6-(pyridoxal phosphate)lysine (Lys-185).

It belongs to the DegT/DnrJ/EryC1 family. Pyridoxal 5'-phosphate serves as cofactor.

This is an uncharacterized protein from Methanocaldococcus jannaschii (strain ATCC 43067 / DSM 2661 / JAL-1 / JCM 10045 / NBRC 100440) (Methanococcus jannaschii).